Reading from the N-terminus, the 318-residue chain is Methionyl-tRNA formyltransferase (318 aa).

Residue 114–117 coordinates (6S)-5,6,7,8-tetrahydrofolate; it reads SLLP.

Belongs to the Fmt family.

The enzyme catalyses L-methionyl-tRNA(fMet) + (6R)-10-formyltetrahydrofolate = N-formyl-L-methionyl-tRNA(fMet) + (6S)-5,6,7,8-tetrahydrofolate + H(+). In terms of biological role, attaches a formyl group to the free amino group of methionyl-tRNA(fMet). The formyl group appears to play a dual role in the initiator identity of N-formylmethionyl-tRNA by promoting its recognition by IF2 and preventing the misappropriation of this tRNA by the elongation apparatus. This Protochlamydia amoebophila (strain UWE25) protein is Methionyl-tRNA formyltransferase.